The following is a 170-amino-acid chain: Allophycocyanin subunit beta-18 (170 aa).

N74 carries the N4-methylasparagine modification. Position 84 (C84) interacts with (2R,3E)-phycocyanobilin.

The protein belongs to the phycobiliprotein family. Heterodimer of an alpha and a beta chain. In terms of processing, contains one covalently linked bilin chromophore.

It localises to the plastid. The protein resides in the chloroplast thylakoid membrane. Light-harvesting photosynthetic bile pigment-protein from the phycobiliprotein complex. Allophycocyanin has a maximum absorption at approximately 650 nanometers. In Cyanidium caldarium (Red alga), this protein is Allophycocyanin subunit beta-18 (apcF).